Consider the following 160-residue polypeptide: Nucleotide-binding protein AHA_1129 (160 aa).

This sequence belongs to the YajQ family.

Functionally, nucleotide-binding protein. The chain is Nucleotide-binding protein AHA_1129 from Aeromonas hydrophila subsp. hydrophila (strain ATCC 7966 / DSM 30187 / BCRC 13018 / CCUG 14551 / JCM 1027 / KCTC 2358 / NCIMB 9240 / NCTC 8049).